We begin with the raw amino-acid sequence, 678 residues long: Transcriptional regulator CRZ1 (678 aa).

Residues 1–21 (MSFSNGNMASYMTSSNGEEQS) are compositionally biased toward polar residues. Disordered regions lie at residues 1-50 (MSFS…SHTF) and 159-195 (TPAD…NYSD). Low complexity predominate over residues 34–47 (YRRNNFRNSSNSGS). Polar residues predominate over residues 166 to 195 (RPSLTNQFLSPRSNYDGTTRSSGIDSNYSD). Threonine 170 carries the phosphothreonine modification. Serine 175, serine 245, and serine 385 each carry phosphoserine. Residues 401-486 (KLKKSRRRSS…SNFNEDNNNN (86 aa)) form a disordered region. The segment covering 410 to 428 (SQTSNNSFTSRRSSRSRSI) has biased composition (low complexity). Basic and acidic residues-rich tracts occupy residues 429–446 (SPDE…KLLE) and 457–467 (DNNRERYDNDS). A compositionally biased stretch (low complexity) spans 472–486 (NTINSSNFNEDNNNN). 2 C2H2-type zinc fingers span residues 569–591 (FACD…LRTH) and 597–619 (FICS…EDLH).

Post-translationally, phosphorylated. Dephosphorylated by calcineurin which leads to rapid translocation from the cytoplasm to the nucleus. Phosphorylated by the cyclin-CDK PHO80-PHO85.

The protein localises to the nucleus. It localises to the cytoplasm. In terms of biological role, involved in the regulation of calcium ion homeostasis. Binds to the calcineurin-dependent response element. Transcriptionally regulates PMC1, PMR1, PMR2A and FKS2. The protein is Transcriptional regulator CRZ1 (CRZ1) of Saccharomyces cerevisiae (strain ATCC 204508 / S288c) (Baker's yeast).